The sequence spans 435 residues: CBL-interacting protein kinase 28 (435 aa).

The Protein kinase domain occupies 11 to 265 (YVIGRQLGQG…ISRIKRSAWY (255 aa)). ATP-binding positions include 17–25 (LGQGTFGKV) and K40. Residue D133 is the Proton acceptor of the active site. An activation loop region spans residues 151-180 (DFGLSALAESRRQDGLLHTACGTPAYVAPE). The NAF domain maps to 283-329 (CTSEAPFSGPTICISSERNQEPPNLHNLNAFDIISLSTGFDLSGLFG). The PPI stretch occupies residues 334-363 (RRESLFTSRKPAAAVLVKLKELAKALNLKV).

Belongs to the protein kinase superfamily. CAMK Ser/Thr protein kinase family. SNF1 subfamily. Requires Mn(2+) as cofactor.

It catalyses the reaction L-seryl-[protein] + ATP = O-phospho-L-seryl-[protein] + ADP + H(+). The enzyme catalyses L-threonyl-[protein] + ATP = O-phospho-L-threonyl-[protein] + ADP + H(+). CIPK serine-threonine protein kinases interact with CBL proteins. Binding of a CBL protein to the regulatory NAF domain of CIPK protein lead to the activation of the kinase in a calcium-dependent manner. The protein is CBL-interacting protein kinase 28 (CIPK28) of Oryza sativa subsp. japonica (Rice).